The following is a 336-amino-acid chain: Fructose-1,6-bisphosphatase class 1 (336 aa).

Mg(2+) contacts are provided by glutamate 92, aspartate 115, leucine 117, and aspartate 118. Residues 118 to 121 (DGSS), asparagine 211, tyrosine 244, 262 to 264 (YLY), and lysine 274 each bind substrate. Glutamate 280 serves as a coordination point for Mg(2+).

Belongs to the FBPase class 1 family. As to quaternary structure, homotetramer. Mg(2+) serves as cofactor.

The protein localises to the cytoplasm. It catalyses the reaction beta-D-fructose 1,6-bisphosphate + H2O = beta-D-fructose 6-phosphate + phosphate. It functions in the pathway carbohydrate biosynthesis; gluconeogenesis. This Aliivibrio fischeri (strain ATCC 700601 / ES114) (Vibrio fischeri) protein is Fructose-1,6-bisphosphatase class 1.